A 258-amino-acid polypeptide reads, in one-letter code: MGLAKRIIPCLDIKDGRVVKGVNFVSLRDAGDPVEIARSYNEQGADELVFLDITASVENRDLILHIVEKVASQVFIPLTVGGGVCKAEDVRRLLNAGADKVSINTSAVLNPELIKESADHYGSQCIVIAIDARQTSDGNPESPRWEVFTHGGRKPTGLDAIEWAQKIQSLGAGEILLTSMDRDGTRSGFDLVLTRTISDAVDLPVIASGGVGNLDHLVDGILQGHADAVLAASIFHYGEFSIRQAKEYLLSHGIEVRL.

Active-site residues include D12 and D131.

Belongs to the HisA/HisF family. As to quaternary structure, heterodimer of HisH and HisF.

It is found in the cytoplasm. It carries out the reaction 5-[(5-phospho-1-deoxy-D-ribulos-1-ylimino)methylamino]-1-(5-phospho-beta-D-ribosyl)imidazole-4-carboxamide + L-glutamine = D-erythro-1-(imidazol-4-yl)glycerol 3-phosphate + 5-amino-1-(5-phospho-beta-D-ribosyl)imidazole-4-carboxamide + L-glutamate + H(+). It participates in amino-acid biosynthesis; L-histidine biosynthesis; L-histidine from 5-phospho-alpha-D-ribose 1-diphosphate: step 5/9. IGPS catalyzes the conversion of PRFAR and glutamine to IGP, AICAR and glutamate. The HisF subunit catalyzes the cyclization activity that produces IGP and AICAR from PRFAR using the ammonia provided by the HisH subunit. This chain is Imidazole glycerol phosphate synthase subunit HisF, found in Nitrosomonas eutropha (strain DSM 101675 / C91 / Nm57).